A 448-amino-acid polypeptide reads, in one-letter code: Phosphoglucosamine mutase (448 aa).

Ser-89 acts as the Phosphoserine intermediate in catalysis. The Mg(2+) site is built by Ser-89, Asp-232, Asp-234, and Asp-236. Ser-89 is subject to Phosphoserine.

This sequence belongs to the phosphohexose mutase family. As to quaternary structure, forms large aggregates. It depends on Mg(2+) as a cofactor. Post-translationally, activated by phosphorylation.

It carries out the reaction alpha-D-glucosamine 1-phosphate = D-glucosamine 6-phosphate. Catalyzes the conversion of glucosamine-6-phosphate to glucosamine-1-phosphate. This chain is Phosphoglucosamine mutase (glmM), found in Methanocaldococcus jannaschii (strain ATCC 43067 / DSM 2661 / JAL-1 / JCM 10045 / NBRC 100440) (Methanococcus jannaschii).